Here is a 103-residue protein sequence, read N- to C-terminus: Stefin-2 (103 aa).

The Secondary area of contact signature appears at 52-56; sequence QVVQG.

Belongs to the cystatin family.

It localises to the cytoplasm. This is an intracellular thiol proteinase inhibitor. The sequence is that of Stefin-2 (Stfa2) from Mus musculus (Mouse).